A 393-amino-acid polypeptide reads, in one-letter code: Formate-dependent phosphoribosylglycinamide formyltransferase (393 aa).

Residues 22–23 and Glu-82 contribute to the N(1)-(5-phospho-beta-D-ribosyl)glycinamide site; that span reads EL. ATP contacts are provided by residues Arg-114, Lys-155, 160–165, 195–198, and Glu-203; these read SSGKGQ and EGFI. Residues 119–308 form the ATP-grasp domain; it reads RLAAEELKLP…QFALHARAIL (190 aa). Glu-267 and Glu-279 together coordinate Mg(2+). N(1)-(5-phospho-beta-D-ribosyl)glycinamide contacts are provided by residues Asp-286, Lys-356, and 363–364; that span reads RR.

The protein belongs to the PurK/PurT family. In terms of assembly, homodimer.

It carries out the reaction N(1)-(5-phospho-beta-D-ribosyl)glycinamide + formate + ATP = N(2)-formyl-N(1)-(5-phospho-beta-D-ribosyl)glycinamide + ADP + phosphate + H(+). Its pathway is purine metabolism; IMP biosynthesis via de novo pathway; N(2)-formyl-N(1)-(5-phospho-D-ribosyl)glycinamide from N(1)-(5-phospho-D-ribosyl)glycinamide (formate route): step 1/1. Involved in the de novo purine biosynthesis. Catalyzes the transfer of formate to 5-phospho-ribosyl-glycinamide (GAR), producing 5-phospho-ribosyl-N-formylglycinamide (FGAR). Formate is provided by PurU via hydrolysis of 10-formyl-tetrahydrofolate. This Pseudomonas syringae pv. syringae (strain B728a) protein is Formate-dependent phosphoribosylglycinamide formyltransferase.